A 321-amino-acid chain; its full sequence is Annexin B10 (321 aa).

Annexin repeat units lie at residues 15-86 (FDAS…GLMM), 87-158 (PPVE…LIVT), 171-243 (GQAK…AIVE), and 247-319 (SPAA…ALLG).

The protein belongs to the annexin family.

In Drosophila melanogaster (Fruit fly), this protein is Annexin B10 (AnxB10).